The following is a 694-amino-acid chain: MTEQYSVAVGEAANEHETAPRRNIRVKDQPLIRPINSSASTLYEFALECFTKGGKRDGMAWRDIIDIHETKKTIVKRVDGKDKPIEKTWLYYELTPYITMTYEEMICVMHDIGRGLIKIGVKPNGENKFHIFASTSHKWMKTFLGCMSQGIPVVTAYDTLGESGLIHSMVETDSVAIFTDNQLLSKLAVPLKTAKNVKFVIHNEPIDPSDKRQNGKLYKAAKDAVDKIKEVRPDIKIYSFDEIIEIGKKAKDEVELHFPKPEDPACIMYTSGSTGTPKGVVLTHYNIVAGIGGVGHNVIGWIGPTDRIIAFLPLAHIFELTFEFEAFYWNGILGYANVKTLTPTSTRNCQGDLMEFKPTVMVGVAAVWETVRKGILAKINELPGWSQTLFWTVYALKERNIPCSGLLSGLIFKRIREATGGNLRFILNGGSAISIDAQKFLSNLLCPMLIGYGLTEGVANACVLEPEHFDYGIAGDLVGTITAKLVDVEDLGYFAKNNQGELLFKGAPICSEYYKNPEETAAAFTDDGWFRTGDIAEWTPKGQVKIIDRKKNLVKTLNGEYIALEKLESIYRSNPYVQNICVYADENKVKPVGIVVPNLGHLSKLAIELGIMVPGEDVESYIHEKKLQDAVCKDMLSTAKSQGLNGIELLCGIVFFEEEWTPENGLVTSAQKLKRRDILAAVKPDVERVYKENT.

A disordered region spans residues 1-21 (MTEQYSVAVGEAANEHETAPR). ATP is bound at residue 269–280 (YTSGSTGTPKGV). The short motif at 527 to 576 (DGWFRTGDIAEWTPKGQVKIIDRKKNLVKTLNGEYIALEKLESIYRSNPY) is the FACS element.

It belongs to the ATP-dependent AMP-binding enzyme family. In terms of assembly, interacts with FAT1. Requires Mg(2+) as cofactor.

Its subcellular location is the lipid droplet. The catalysed reaction is a long-chain fatty acid + ATP + CoA = a long-chain fatty acyl-CoA + AMP + diphosphate. The enzyme catalyses (9Z)-hexadecenoate + ATP + CoA = (9Z)-hexadecenoyl-CoA + AMP + diphosphate. It carries out the reaction (9Z)-octadecenoate + ATP + CoA = (9Z)-octadecenoyl-CoA + AMP + diphosphate. It catalyses the reaction hexadecanoate + ATP + CoA = hexadecanoyl-CoA + AMP + diphosphate. Its function is as follows. Activates long-chain fatty acids (LCFA) by esterification of the fatty acids into metabolically active CoA-thioesters for subsequent degradation or incorporation into phospholipids. Also facilitates the transport of LCFAs into the cell, either by active transport or by decreasing the intracellular LCFA concentration. Contributes, with FAA1, to the activation of imported myristate. Also involved in long-chain base (LCB) uptake. In contrast ot LCFA uptake, LCB uptake does not require ATP, suggesting that the enzyme is directly involved in LCB uptake. Involved in the sphingolipid-to-glycerolipid metabolic pathway, converting the sphingolipid metabolite hexadecenoic acid to hexadecenoyl-CoA, which is then further converted to glycerolipids. The sequence is that of Long-chain-fatty-acid--CoA ligase 4 (FAA4) from Saccharomyces cerevisiae (strain ATCC 204508 / S288c) (Baker's yeast).